A 673-amino-acid chain; its full sequence is Protein-arginine deiminase type-2 (673 aa).

At methionine 1 the chain carries N-acetylmethionine. Aspartate 131, aspartate 133, aspartate 135, glutamate 139, asparagine 162, aspartate 164, aspartate 166, aspartate 174, aspartate 177, lysine 179, aspartate 185, and aspartate 188 together coordinate Ca(2+). At arginine 352 the chain carries Citrulline. Ca(2+) is bound by residues glutamate 362, aspartate 397, phenylalanine 416, leucine 419, and glutamate 420. Residue cysteine 655 is the Nucleophile of the active site.

The protein belongs to the protein arginine deiminase family. Homodimer. Ca(2+) serves as cofactor. As to expression, expressed in various tissues including muscle, uterus, spinal cord, salivary gland and pancreas.

The protein resides in the cytoplasm. The catalysed reaction is L-arginyl-[protein] + H2O = L-citrullyl-[protein] + NH4(+). Functionally, catalyzes the deimination of arginine residues of proteins. This Mus musculus (Mouse) protein is Protein-arginine deiminase type-2 (Padi2).